A 707-amino-acid chain; its full sequence is Choline transporter-like protein 4 (707 aa).

At Met-1–Asp-32 the chain is on the cytoplasmic side. The helical transmembrane segment at Ile-33–Ala-53 threads the bilayer. The Extracellular portion of the chain corresponds to Trp-54–Trp-227. Asn-67, Asn-185, Asn-195, and Asn-196 each carry an N-linked (GlcNAc...) asparagine glycan. The helical transmembrane segment at Tyr-228 to Leu-248 threads the bilayer. Topologically, residues Arg-249 to Leu-250 are cytoplasmic. The helical transmembrane segment at Val-251–Ile-271 threads the bilayer. The Extracellular segment spans residues Tyr-272 to Trp-307. A glycan (N-linked (GlcNAc...) asparagine) is linked at Asn-296. The chain crosses the membrane as a helical span at residues Leu-308–Leu-328. The Cytoplasmic portion of the chain corresponds to Arg-329–Pro-356. The helical transmembrane segment at Leu-357–Leu-377 threads the bilayer. The Extracellular segment spans residues Ala-378–Asn-452. 3 N-linked (GlcNAc...) asparagine glycosylation sites follow: Asn-391, Asn-403, and Asn-413. Residues Trp-453–Phe-473 traverse the membrane as a helical segment. The Cytoplasmic portion of the chain corresponds to His-474 to Ser-498. A helical membrane pass occupies residues Leu-499 to Ile-519. Residues Asp-520 to Tyr-557 are Extracellular-facing. A helical membrane pass occupies residues Ile-558–Leu-578. Residues Met-579 to Leu-594 are Cytoplasmic-facing. A helical transmembrane segment spans residues Leu-595–Phe-615. Residues Ser-616–Trp-635 are Extracellular-facing. A helical membrane pass occupies residues Leu-636–Phe-656. Over Gly-657–Lys-707 the chain is Cytoplasmic.

The protein belongs to the CTL (choline transporter-like) family. In terms of processing, N-glycosylated; N-glycosylation of Asn-67 and Asn-391 is required for a proper thiamine pyrophosphate uptake. Highly expressed in intestine, kidney and stomach. Also expressed in testis and lung.

The protein resides in the membrane. Its subcellular location is the apical cell membrane. The enzyme catalyses choline(out) + n H(+)(in) = choline(in) + n H(+)(out). The catalysed reaction is thiamine diphosphate(out) = thiamine diphosphate(in). In terms of biological role, choline transporter that plays a role in the choline-acetylcholine system and is required to the efferent innervation of hair cells in the olivocochlear bundle for the maintenance of physiological function of outer hair cells and the protection of hair cells from acoustic injury. Also described as a thiamine pyrophosphate transporter in colon, may mediate the absorption of microbiota-generated thiamine pyrophosphate and contribute to host thiamine (vitamin B1) homeostasis. The chain is Choline transporter-like protein 4 from Rattus norvegicus (Rat).